The primary structure comprises 143 residues: Putative pre-16S rRNA nuclease (143 aa).

This sequence belongs to the YqgF nuclease family.

It is found in the cytoplasm. Its function is as follows. Could be a nuclease involved in processing of the 5'-end of pre-16S rRNA. The protein is Putative pre-16S rRNA nuclease of Lactobacillus gasseri (strain ATCC 33323 / DSM 20243 / BCRC 14619 / CIP 102991 / JCM 1131 / KCTC 3163 / NCIMB 11718 / NCTC 13722 / AM63).